The primary structure comprises 598 residues: MDNKKIRNFAIIAHIDHGKSTLADRILEFTNTVSKRDLKEQHLDSMDLEKERGITIKLNAVQIRYNSYIFHLIDTPGHVDFTYEVSRSLAATEGALLLVDASQGIQAQTLANVYLALENNLEIIPIINKIDLPSANVDKVKAEIENTIGISAENAILISAKNGIGIEKVLEAIVNLIPPPQASDEKDPLKALVFDSYFDIYRGVIIFIRVVTGKISVGDTFKFMANNLKFSVIELGISSPNQVKKEALFAGEVGWVAASIRNAKDVEVGDTITLVENPAKSPLPGYKKLVPVMYTGFYPVDSQQYNLLKDSLEKISLSDSSIIYEPESSKALGFGFRIGFLGLLHMEILQERLEREFNLSIIATAPSVEFQITRTNGQVQIISNPSLFPEPNFISEIREPFILAKIFLPEEFLGQIMGLCQDKRGIYVDLEYIDDFRRRLIYKLPLVEVIFDFFDRLKSLSKGYASFEYEVIDYQVSKLQKLDILLNGQKIDALSMIVHKDFAYPKARDLTQKLKEIIPRHSFEVPVQAVIGSKVIARETIKAYRKDVTAKLYGGDVTRRKKLLEKQKAGKKRMKSFGVVDVPQEAFLAILKTNVNEK.

The tr-type G domain occupies 4–181 (KKIRNFAIIA…AIVNLIPPPQ (178 aa)). GTP-binding positions include 16-21 (DHGKST) and 128-131 (NKID).

This sequence belongs to the TRAFAC class translation factor GTPase superfamily. Classic translation factor GTPase family. LepA subfamily.

Its subcellular location is the cell membrane. It catalyses the reaction GTP + H2O = GDP + phosphate + H(+). Required for accurate and efficient protein synthesis under certain stress conditions. May act as a fidelity factor of the translation reaction, by catalyzing a one-codon backward translocation of tRNAs on improperly translocated ribosomes. Back-translocation proceeds from a post-translocation (POST) complex to a pre-translocation (PRE) complex, thus giving elongation factor G a second chance to translocate the tRNAs correctly. Binds to ribosomes in a GTP-dependent manner. This chain is Elongation factor 4, found in Mesomycoplasma hyopneumoniae (strain 7448) (Mycoplasma hyopneumoniae).